Reading from the N-terminus, the 268-residue chain is Stomatin homolog PYRAB06580 (268 aa).

The chain crosses the membrane as a helical span at residues 1-21; the sequence is MILPTNFFVTTIILLFILIFL. 2 coiled-coil regions span residues 125 to 152 and 178 to 213; these read GQAH…EATD and KQAE…ISEH.

It belongs to the band 7/mec-2 family. In terms of assembly, homotrimer.

Its subcellular location is the membrane. The polypeptide is Stomatin homolog PYRAB06580 (Pyrococcus abyssi (strain GE5 / Orsay)).